The chain runs to 63 residues: Conotoxin TxMRCL-D012 (63 aa).

Positions 1–19 (MRCLPVFVILLLLIASTPS) are cleaved as a signal peptide. Positions 20–47 (DTVPLKTKDDMPQASFHGNARRTLQMLS) are excised as a propeptide. Residue glutamine 50 is modified to Pyrrolidone carboxylic acid.

Belongs to the conotoxin T superfamily. Contains 2 disulfide bonds that can be either 'C1-C3, C2-C4' or 'C1-C4, C2-C3', since these disulfide connectivities have been observed for conotoxins with cysteine framework V (for examples, see AC P0DQQ7 and AC P81755). In terms of tissue distribution, expressed by the venom duct.

Its subcellular location is the secreted. The chain is Conotoxin TxMRCL-D012 from Conus textile (Cloth-of-gold cone).